Reading from the N-terminus, the 147-residue chain is MSEAKDFLRDLLDQVRAGDSYGQLDRFSDSQLLAPFVVTKEQRRTIATNCDLDIATAARLRSFYQAVAAATEKATGAFTTTILDLNSEGFGRVIIFAGRLVVLDNALRDVQRFGFNSSEELAARGEALVLGASKLIERWSEVARDDS.

It belongs to the UPF0460 family.

This Frankia alni protein is UPF0460 protein in nifX-nifW intergenic region.